The chain runs to 215 residues: Pyridoxine/pyridoxamine 5'-phosphate oxidase (215 aa).

Substrate is bound by residues 11 to 14 (RRDY) and Lys69. FMN contacts are provided by residues 64 to 69 (RVVLLK), 79 to 80 (YT), Lys86, and Gln108. Tyr126, Arg130, and Ser134 together coordinate substrate. FMN contacts are provided by residues 143 to 144 (QS) and Trp188. 194-196 (RLH) contacts substrate. Arg198 serves as a coordination point for FMN.

This sequence belongs to the pyridoxamine 5'-phosphate oxidase family. As to quaternary structure, homodimer. It depends on FMN as a cofactor.

It carries out the reaction pyridoxamine 5'-phosphate + O2 + H2O = pyridoxal 5'-phosphate + H2O2 + NH4(+). It catalyses the reaction pyridoxine 5'-phosphate + O2 = pyridoxal 5'-phosphate + H2O2. Its pathway is cofactor metabolism; pyridoxal 5'-phosphate salvage; pyridoxal 5'-phosphate from pyridoxamine 5'-phosphate: step 1/1. It functions in the pathway cofactor metabolism; pyridoxal 5'-phosphate salvage; pyridoxal 5'-phosphate from pyridoxine 5'-phosphate: step 1/1. Catalyzes the oxidation of either pyridoxine 5'-phosphate (PNP) or pyridoxamine 5'-phosphate (PMP) into pyridoxal 5'-phosphate (PLP). In Legionella pneumophila (strain Lens), this protein is Pyridoxine/pyridoxamine 5'-phosphate oxidase.